Consider the following 145-residue polypeptide: Immunity protein CdiI (145 aa).

Interacts with cognate toxin fragment CdiA-CT.

Immunity protein component of a toxin-immunity protein module, which functions as a cellular contact-dependent growth inhibition (CDI) system. CDI modules allow bacteria to communicate with and inhibit the growth of closely related neighboring bacteria in a contact-dependent fashion. Protects cells against the 16S rRNase activity of CdiA-CT, its cognate toxin protein, but not against the toxic effects of a similar rRNase, non-cognate CdiA-CT from E.chrysanthemi strain EC16. The sequence is that of Immunity protein CdiI from Enterobacter cloacae subsp. cloacae (strain ATCC 13047 / DSM 30054 / NBRC 13535 / NCTC 10005 / WDCM 00083 / NCDC 279-56).